We begin with the raw amino-acid sequence, 100 residues long: Integration host factor subunit alpha (100 aa).

Residues 53-72 are disordered; sequence FDLRDKRQRPGRNPKTGEEI.

The protein belongs to the bacterial histone-like protein family. In terms of assembly, heterodimer of an alpha and a beta chain.

Its function is as follows. This protein is one of the two subunits of integration host factor, a specific DNA-binding protein that functions in genetic recombination as well as in transcriptional and translational control. This Pseudomonas putida (strain ATCC 700007 / DSM 6899 / JCM 31910 / BCRC 17059 / LMG 24140 / F1) protein is Integration host factor subunit alpha.